Reading from the N-terminus, the 885-residue chain is Lon protease homolog 2, peroxisomal (885 aa).

The region spanning 12–256 (LAVLPFRNKV…KATELVDRHL (245 aa)) is the Lon N-terminal domain. Residues 70–104 (LLSPGVGSDSGEGGSKVGGSAVESSKQDTKNGKEP) form a disordered region. Residues 77-86 (SDSGEGGSKV) show a composition bias toward gly residues. A compositionally biased stretch (basic and acidic residues) spans 94–104 (SKQDTKNGKEP). 409-416 (GPPGVGKT) lines the ATP pocket. One can recognise a Lon proteolytic domain in the interval 690-875 (VASPGVSVGL…EEVLDHAFEG (186 aa)). Catalysis depends on residues Ser781 and Lys824. Residues 883–885 (SKL) carry the Microbody targeting signal motif.

Belongs to the peptidase S16 family.

The protein resides in the peroxisome matrix. The catalysed reaction is Hydrolysis of proteins in presence of ATP.. Its function is as follows. ATP-dependent serine protease that mediates the selective degradation of misfolded and unassembled polypeptides in the peroxisomal matrix. Necessary for type 2 peroxisome targeting signal (PTS2)-containing protein processing and facilitates peroxisome matrix protein import. In Zea mays (Maize), this protein is Lon protease homolog 2, peroxisomal (LON1).